Consider the following 992-residue polypeptide: RNA-binding protein 12 (992 aa).

The region spanning 304–379 (LYVSVHGMPF…RYVEVSPATE (76 aa)) is the RRM 1 domain. Residues S352 and S375 each carry the phosphoserine modification. The interval 393–424 (QSMGPSGQAHPPPQTLPRSKSPSGQKRSRSRS) is disordered. Polar residues predominate over residues 408 to 417 (LPRSKSPSGQ). A phosphoserine mark is found at S420, S422, and S424. The RRM 2 domain occupies 430 to 507 (FCVYLKGLPF…RFIQVHPITK (78 aa)). At S525 the chain carries Phosphoserine. The interval 849 to 913 (FGGIPQNFGN…PGFGASSGKP (65 aa)) is disordered. The span at 876-887 (LGSVPGHLSGPP) shows a compositional bias: low complexity. The RRM 3 domain maps to 916-992 (TIIKVQNMPF…GSRKVKLVLG (77 aa)).

The protein localises to the nucleus. The polypeptide is RNA-binding protein 12 (Rbm12) (Mus musculus (Mouse)).